Reading from the N-terminus, the 191-residue chain is Calcium-activated potassium channel subunit beta-1 (191 aa).

Residues 2–18 (GKKLVMAQRRGETRALC) are Cytoplasmic-facing. The helical transmembrane segment at 19–39 (LGVAMVVGAVITYYILGTTVL) threads the bilayer. Topologically, residues 40–157 (PLYQKSVWTQ…YRRLYGPQSL (118 aa)) are extracellular. N-linked (GlcNAc...) asparagine glycans are attached at residues Asn80 and Asn142. The chain crosses the membrane as a helical span at residues 158–178 (LFSLFWPTFLLTGGLLIIVMV). The Cytoplasmic segment spans residues 179 to 191 (KINQSLSILAAQR).

Belongs to the KCNMB (TC 8.A.14.1) family. KCNMB1 subfamily. Interacts with KCNMA1 tetramer. There are probably 4 molecules of KCMNB1 per KCNMA1 tetramer. N-glycosylated.

Its subcellular location is the membrane. Regulatory subunit of the calcium activated potassium KCNMA1 (maxiK) channel. Modulates the calcium sensitivity and gating kinetics of KCNMA1, thereby contributing to KCNMA1 channel diversity. Increases the apparent Ca(2+)/voltage sensitivity of the KCNMA1 channel. It also modifies KCNMA1 channel kinetics and alters its pharmacological properties. It slows down the activation and the deactivation kinetics of the channel. Acts as a negative regulator of smooth muscle contraction by enhancing the calcium sensitivity to KCNMA1. Its presence is also a requirement for internal binding of the KCNMA1 channel opener dehydrosoyasaponin I (DHS-1) triterpene glycoside and for external binding of the agonist hormone 17-beta-estradiol (E2). Increases the binding activity of charybdotoxin (CTX) toxin to KCNMA1 peptide blocker by increasing the CTX association rate and decreasing the dissociation rate. This Bos taurus (Bovine) protein is Calcium-activated potassium channel subunit beta-1 (KCNMB1).